Reading from the N-terminus, the 285-residue chain is Bis(5'-nucleosyl)-tetraphosphatase, symmetrical (285 aa).

It belongs to the Ap4A hydrolase family.

The catalysed reaction is P(1),P(4)-bis(5'-adenosyl) tetraphosphate + H2O = 2 ADP + 2 H(+). Functionally, hydrolyzes diadenosine 5',5'''-P1,P4-tetraphosphate to yield ADP. This Pseudomonas entomophila (strain L48) protein is Bis(5'-nucleosyl)-tetraphosphatase, symmetrical.